The chain runs to 420 residues: MSGRPRTTSFAESCKPVQQPSSFGSMKVSRDKDGSKVTTVVATPGQGPDRQQEVTYTDTKVIGNGSFGVVYQAKLCDTGELVAIKKVLQDKRFKNRELQIMRKLDHCNIVRLRYFFYSSGEKKDEVYLNLVLDYVPETVYRVARHYSRAKQALPIIYVKLYMYQLFRSLAYIHSFGICHRDIKPQNLLLDPETAVLKLCDFGSAKQLVRGEPNVSYICSRYYRAPELIFGATDYTSSIDVWSAGCVLAELLLGQPIFPGDSGVDQLVEIIKVLGTPTREQIREMNPNYTEFKFPQIKAHPWTKVFRARTPPEAIALCSRLLEYTPTSRLTPLDACAHSFFDELRDPNLKLPNGREFPALFNFTTQELSSNPSLSSILIPAHARNQAAVSTTSNTTSTSDSNTGERGSTNNAASASASNSS.

Residues 1 to 24 (MSGRPRTTSFAESCKPVQQPSSFG) are compositionally biased toward polar residues. Residues 1 to 50 (MSGRPRTTSFAESCKPVQQPSSFGSMKVSRDKDGSKVTTVVATPGQGPDR) form a disordered region. Residues 56–340 (YTDTKVIGNG…PLDACAHSFF (285 aa)) form the Protein kinase domain. Residues 62–70 (IGNGSFGVV) and K85 each bind ATP. Residue D181 is the Proton acceptor of the active site. Residues 384 to 420 (NQAAVSTTSNTTSTSDSNTGERGSTNNAASASASNSS) are disordered. 2 stretches are compositionally biased toward low complexity: residues 389–401 (STTS…SDSN) and 409–420 (NNAASASASNSS).

It belongs to the protein kinase superfamily. CMGC Ser/Thr protein kinase family. GSK-3 subfamily. In terms of processing, phosphorylated. Activated by phosphorylation at Tyr-216.

The protein localises to the cytoplasm. It is found in the nucleus. It localises to the cell membrane. The catalysed reaction is L-seryl-[tau protein] + ATP = O-phospho-L-seryl-[tau protein] + ADP + H(+). It carries out the reaction L-threonyl-[tau protein] + ATP = O-phospho-L-threonyl-[tau protein] + ADP + H(+). Plays a role in the organization of the formation of the main body axis of developing embryo. Acts as an inhibitor of differentiation of primary neurons. Inhibits the ability of ectopically expressed NEUROD1 and other bHLH factors to promote early retinal cell differentiation. May participate in the Wnt signaling pathway. May regulate the circadian clock via phosphorylation of the major clock components. The sequence is that of Glycogen synthase kinase-3 beta (gsk3b) from Xenopus laevis (African clawed frog).